The sequence spans 270 residues: Acetylglutamate kinase (270 aa).

Residues 41-42, arginine 63, and asparagine 166 each bind substrate; that span reads GG.

It belongs to the acetylglutamate kinase family. ArgB subfamily.

Its subcellular location is the cytoplasm. The catalysed reaction is N-acetyl-L-glutamate + ATP = N-acetyl-L-glutamyl 5-phosphate + ADP. Its pathway is amino-acid biosynthesis; L-arginine biosynthesis; N(2)-acetyl-L-ornithine from L-glutamate: step 2/4. Functionally, catalyzes the ATP-dependent phosphorylation of N-acetyl-L-glutamate. This chain is Acetylglutamate kinase, found in Anaeromyxobacter dehalogenans (strain 2CP-C).